The sequence spans 839 residues: LPS-assembly protein LptD (839 aa).

Positions 1–21 (MAIGITACVLSLINYQGLAYS) are cleaved as a signal peptide.

Belongs to the LptD family. In terms of assembly, component of the lipopolysaccharide transport and assembly complex. Interacts with LptE and LptA.

Its subcellular location is the cell outer membrane. Together with LptE, is involved in the assembly of lipopolysaccharide (LPS) at the surface of the outer membrane. The chain is LPS-assembly protein LptD from Legionella pneumophila subsp. pneumophila (strain Philadelphia 1 / ATCC 33152 / DSM 7513).